A 171-amino-acid polypeptide reads, in one-letter code: Adenine phosphoribosyltransferase (171 aa).

This sequence belongs to the purine/pyrimidine phosphoribosyltransferase family. Homodimer.

The protein resides in the cytoplasm. It carries out the reaction AMP + diphosphate = 5-phospho-alpha-D-ribose 1-diphosphate + adenine. The protein operates within purine metabolism; AMP biosynthesis via salvage pathway; AMP from adenine: step 1/1. Its function is as follows. Catalyzes a salvage reaction resulting in the formation of AMP, that is energically less costly than de novo synthesis. The protein is Adenine phosphoribosyltransferase of Natranaerobius thermophilus (strain ATCC BAA-1301 / DSM 18059 / JW/NM-WN-LF).